We begin with the raw amino-acid sequence, 135 residues long: Transcription antitermination protein NusB (135 aa).

Belongs to the NusB family.

Functionally, involved in transcription antitermination. Required for transcription of ribosomal RNA (rRNA) genes. Binds specifically to the boxA antiterminator sequence of the ribosomal RNA (rrn) operons. In Wolinella succinogenes (strain ATCC 29543 / DSM 1740 / CCUG 13145 / JCM 31913 / LMG 7466 / NCTC 11488 / FDC 602W) (Vibrio succinogenes), this protein is Transcription antitermination protein NusB.